Consider the following 412-residue polypeptide: Argininosuccinate synthase (412 aa).

Residues 11–19 (AYSGGLDTS) and alanine 37 contribute to the ATP site. The L-citrulline site is built by tyrosine 88 and serine 93. Position 116-124 (116-124 (SHGATGKGN)) interacts with ATP. Residues threonine 120, asparagine 124, and aspartate 125 each contribute to the L-aspartate site. Position 124 (asparagine 124) interacts with L-citrulline. L-citrulline contacts are provided by arginine 128, serine 181, serine 190, glutamate 271, and tyrosine 283.

Belongs to the argininosuccinate synthase family. As to quaternary structure, homotetramer.

The protein resides in the cytoplasm. It localises to the cytosol. The catalysed reaction is L-citrulline + L-aspartate + ATP = 2-(N(omega)-L-arginino)succinate + AMP + diphosphate + H(+). Its pathway is amino-acid biosynthesis; L-arginine biosynthesis; L-arginine from L-ornithine and carbamoyl phosphate: step 2/3. The protein operates within nitrogen metabolism; urea cycle; (N(omega)-L-arginino)succinate from L-aspartate and L-citrulline: step 1/1. Functionally, one of the enzymes of the urea cycle, the metabolic pathway transforming neurotoxic amonia produced by protein catabolism into inocuous urea in the liver of ureotelic animals. Catalyzes the formation of arginosuccinate from aspartate, citrulline and ATP and together with ASL it is responsible for the biosynthesis of arginine in most body tissues. This Xenopus tropicalis (Western clawed frog) protein is Argininosuccinate synthase.